The chain runs to 424 residues: Zinc metalloproteinase-disintegrin-like brevilysin H2b (424 aa).

Q1 carries the pyrrolidone carboxylic acid modification. In terms of domain architecture, Peptidase M12B spans 9 to 207; it reads RYVKLAIVAD…YKPQCILNEP (199 aa). Residue N69 is glycosylated (N-linked (GlcNAc...) asparagine). A Ca(2+)-binding site is contributed by D96. Disulfide bonds link C120-C202, C164-C186, and C166-C169. H145 contacts Zn(2+). E146 is a catalytic residue. Zn(2+) is bound by residues H149 and H155. N185 carries N-linked (GlcNAc...) asparagine glycosylation. Ca(2+)-binding residues include C202, N205, V217, N220, L222, E224, E227, and D230. Positions 215 to 301 constitute a Disintegrin domain; sequence PPVCGNELLE…DCPTDDLQRN (87 aa). 14 cysteine pairs are disulfide-bonded: C218–C247, C229–C242, C231–C237, C241–C264, C255–C261, C260–C286, C273–C293, C280–C312, C305–C317, C324–C374, C339–C385, C352–C362, C369–C411, and C405–C417. The D/ECD-tripeptide motif lies at 279–281; the sequence is DCD. Residues D281, E284, and D296 each contribute to the Ca(2+) site.

Belongs to the venom metalloproteinase (M12B) family. P-III subfamily. P-IIIa sub-subfamily. In terms of assembly, monomer. The cofactor is Zn(2+). In terms of processing, glycosylated. Expressed by the venom gland.

It is found in the secreted. Its activity is regulated as follows. Its proteolytic activity is inhibited by EDTA, TPEN, 1,10-phenanthroline, and some thiol compounds, but is enhanced by alkaline earth metal ions (Mg2+, Ca2+, Sr2+, and Ba2+). Its activity is not modulated by urea (4 M). Non-hemorrhagic metalloproteinase that degrades fibrinogen. The alpha chain (FGA) is rapidly degraded, the beta chain (FGB) is degraded very slowly, while the gamma chain is left intact. Shows a prefential cleavage at X-Leu bonds. Cleaves insulin B chain at '29-His-|-Leu-30', '33-Ser-|-His-34', '38-Ala-|-Leu-39' and '40-Tyr-|-Leu-41' bonds. The sequence is that of Zinc metalloproteinase-disintegrin-like brevilysin H2b from Gloydius brevicauda (Korean slamosa snake).